Here is a 544-residue protein sequence, read N- to C-terminus: Chaperonin GroEL (544 aa).

ATP is bound by residues 30-33 (TLGP), K51, 87-91 (DGTTT), G415, 480-482 (DAA), and D496.

It belongs to the chaperonin (HSP60) family. In terms of assembly, forms a cylinder of 14 subunits composed of two heptameric rings stacked back-to-back. Interacts with the co-chaperonin GroES.

Its subcellular location is the cytoplasm. The enzyme catalyses ATP + H2O + a folded polypeptide = ADP + phosphate + an unfolded polypeptide.. Together with its co-chaperonin GroES, plays an essential role in assisting protein folding. The GroEL-GroES system forms a nano-cage that allows encapsulation of the non-native substrate proteins and provides a physical environment optimized to promote and accelerate protein folding. This Sulfurihydrogenibium sp. (strain YO3AOP1) protein is Chaperonin GroEL.